A 358-amino-acid chain; its full sequence is Gentisate 1,2-dioxygenase (358 aa).

The region spanning 239-358 (QTLRQRAEND…AFNFYAEAEP (120 aa)) is the Cupin type-1 domain.

The protein belongs to the gentisate 1,2-dioxygenase family. Homotetramer.

The catalysed reaction is 2,5-dihydroxybenzoate + O2 = 3-maleylpyruvate + H(+). Its pathway is aromatic compound metabolism; naphthalene degradation. With respect to regulation, inhibited by 2,2'-dipyridyl. Functionally, catalyzes the oxygen-dependent ring fission of gentisate between the carboxyl and proximal hydroxyl groups at positions 1 and 2 of the aromatic ring to form maleylpyruvate. No activity with cathechol and protecatechuate as substrates. Part of a 3-hydroxybenzoic acid-degradation pathway. This chain is Gentisate 1,2-dioxygenase (gdoA), found in Haloferax sp.